Consider the following 59-residue polypeptide: MANTVKVTLIKSVSGRIPNHKLCVKGLGLRRIGHTVEVQDTPENRGMINKAYYMLRVEG.

Belongs to the universal ribosomal protein uL30 family. As to quaternary structure, part of the 50S ribosomal subunit.

In Stutzerimonas stutzeri (strain A1501) (Pseudomonas stutzeri), this protein is Large ribosomal subunit protein uL30.